A 478-amino-acid polypeptide reads, in one-letter code: Cytochrome c biogenesis protein CcsB (478 aa).

3 helical membrane passes run leucine 30–isoleucine 50, threonine 89–threonine 109, and phenylalanine 175–serine 195. Residues leucine 453–glycine 478 are disordered. Pro residues predominate over residues proline 456 to alanine 466.

Belongs to the Ccs1/CcsB family. As to quaternary structure, may interact with CcsA.

It is found in the cellular thylakoid membrane. In terms of biological role, required during biogenesis of c-type cytochromes (cytochrome c6 and cytochrome f) at the step of heme attachment. The polypeptide is Cytochrome c biogenesis protein CcsB (Synechococcus sp. (strain JA-3-3Ab) (Cyanobacteria bacterium Yellowstone A-Prime)).